We begin with the raw amino-acid sequence, 129 residues long: Azurin-2 (129 aa).

The region spanning Ala1 to Ser129 is the Plastocyanin-like domain. A disulfide bridge links Cys3 with Cys26. Cu cation contacts are provided by His46, Cys112, His117, and Met121.

Its subcellular location is the periplasm. Transfers electrons from cytochrome c551 to cytochrome oxidase. The polypeptide is Azurin-2 (Alcaligenes xylosoxydans xylosoxydans (Achromobacter xylosoxidans)).